A 288-amino-acid chain; its full sequence is Coiled-coil domain-containing protein 190 (288 aa).

A coiled-coil region spans residues 16-69 (LERKSARQAEARLSLRLQRLEIICLYHVKSLAREQRQLQKELQRLQQDIIKKRF). Residues 141–235 (GERTSCFKEG…SSVDYAGSFK (95 aa)) are disordered. The span at 177 to 188 (HDQELSTNKTED) shows a compositional bias: basic and acidic residues. Over residues 203-213 (ANETRSENASQ) the composition is skewed to polar residues.

The polypeptide is Coiled-coil domain-containing protein 190 (Ccdc190) (Mus musculus (Mouse)).